Here is an 86-residue protein sequence, read N- to C-terminus: Protein P17 (86 aa).

Residues 63–86 (SPAEKPDNQPELTGITFEGDNNDQ) are disordered.

Homotetramer.

Its function is as follows. Assembly protein that acts late in phage assembly, after capsid protein folding and multimerization, and sorting of membrane proteins has occurred. The major coat protein P3 and two assembly factors (P10 and P17) are needed during the assembly of the virus particle inside the host cell, when the capsid protein multimers are capable of enclosing the host-derived membrane, containing the virus-encoded membrane-associated proteins. This is Protein P17 (XVII) from Enterobacteria phage PRD1 (Bacteriophage PRD1).